A 74-amino-acid polypeptide reads, in one-letter code: Kappa-scoloptoxin(07)-Ssm2d (74 aa).

The N-terminal stretch at 1 to 19 (MLVFYALLFVTVFSNTVMG) is a signal peptide. Residues 20 to 41 (ATIDKPIPKPILREAIEEIEVN) constitute a propeptide that is removed on maturation.

It belongs to the scoloptoxin-07 family. Post-translationally, contains 3 disulfide bonds. Expressed by the venom gland.

The protein resides in the secreted. In terms of biological role, inhibits voltage-gated potassium channels. This chain is Kappa-scoloptoxin(07)-Ssm2d, found in Scolopendra mutilans (Chinese red-headed centipede).